Here is a 103-residue protein sequence, read N- to C-terminus: Hexon-interlacing protein (103 aa).

A coiled-coil region spans residues 72–99 (LDELKIQVAAMQNSVTAIQREVNDLKQR).

It belongs to the adenoviridae hexon-interlacing protein family. In terms of assembly, homotrimer. Interacts with hexon protein; this interaction tethers the hexons together. Self-interacts with adjacent proteins. Interacts with kinesin light chain KLC1; this interaction leads to capsid disruption at the nuclear pore complex during virus entry into host cell.

The protein localises to the virion. It is found in the host nucleus. Its function is as follows. Structural component of the virion that acts as a cement protein on the capsid exterior and forms triskelion structures consisting of three molecules that stabilize three hexon trimers at the center of each icosahedral facet and fixes the peripentonal hexons. Dispensable for assembly. During virus entry, recruits the anterograde motor kinesin-1 to the capsid docked at the nuclear pore complex thereby subjecting the docked capsid to a pulling force. The resulting tension leads to capsid disruption, dispersion of capsid fragments toward cell periphery and eventually viral DNA entry into the host nucleus. This is Hexon-interlacing protein from Canis lupus familiaris (Dog).